The sequence spans 438 residues: 5-methylthioadenosine/S-adenosylhomocysteine deaminase (438 aa).

Residues His-66 and His-68 each contribute to the Zn(2+) site. Substrate contacts are provided by Glu-95, Arg-148, and His-188. Zn(2+) is bound at residue His-215. Positions 218 and 305 each coordinate substrate. Asp-305 is a binding site for Zn(2+).

The protein belongs to the metallo-dependent hydrolases superfamily. MTA/SAH deaminase family. Requires Zn(2+) as cofactor.

It catalyses the reaction S-adenosyl-L-homocysteine + H2O + H(+) = S-inosyl-L-homocysteine + NH4(+). The enzyme catalyses S-methyl-5'-thioadenosine + H2O + H(+) = S-methyl-5'-thioinosine + NH4(+). Its function is as follows. Catalyzes the deamination of 5-methylthioadenosine and S-adenosyl-L-homocysteine into 5-methylthioinosine and S-inosyl-L-homocysteine, respectively. Is also able to deaminate adenosine. This chain is 5-methylthioadenosine/S-adenosylhomocysteine deaminase, found in Halalkalibacterium halodurans (strain ATCC BAA-125 / DSM 18197 / FERM 7344 / JCM 9153 / C-125) (Bacillus halodurans).